We begin with the raw amino-acid sequence, 636 residues long: Sodium-dependent multivitamin transporter (636 aa).

12 consecutive transmembrane segments (helical) span residues 24 to 44, 68 to 88, 101 to 121, 143 to 163, 176 to 196, 199 to 219, 256 to 276, 297 to 317, 336 to 356, 404 to 424, 428 to 448, and 456 to 476; these read FSLV…AIGL, CLPV…ILGV, FLGC…IPVF, ICGT…VLYA, LWLS…LGGL, VIWT…AVII, FWTL…VNQA, VFPC…VMFA, FVLY…GLFV, FGYG…GPVL, ISIF…GMFF, and AIVG…GSIV. N-linked (GlcNAc...) asparagine glycosylation is found at Asn489 and Asn498. Residues 528 to 548 traverse the membrane as a helical segment; that stretch reads LWYSAHNSTTVIVVGLIVSLL. The segment at 606–627 is disordered; it reads LRASGDKEPMTEASPVHQGTSP.

Belongs to the sodium:solute symporter (SSF) (TC 2.A.21) family. In terms of assembly, interacts with PDZD11.

It is found in the cell membrane. The protein resides in the apical cell membrane. The enzyme catalyses biotin(out) + 2 Na(+)(out) = biotin(in) + 2 Na(+)(in). It catalyses the reaction (R)-pantothenate(out) + 2 Na(+)(out) = (R)-pantothenate(in) + 2 Na(+)(in). The catalysed reaction is (R)-lipoate(out) + 2 Na(+)(out) = (R)-lipoate(in) + 2 Na(+)(in). It carries out the reaction iodide(out) + 2 Na(+)(out) = iodide(in) + 2 Na(+)(in). Its function is as follows. Sodium-dependent multivitamin transporter that mediates the electrogenic transport of pantothenate, biotin, lipoate and iodide. Functions as a Na(+)-coupled substrate symporter where the stoichiometry of Na(+):substrate is 2:1, creating an electrochemical Na(+) gradient used as driving force for substrate uptake. Required for biotin and pantothenate uptake in the intestine across the brush border membrane. Plays a role in the maintenance of intestinal mucosa integrity, by providing the gut mucosa with biotin. Contributes to the luminal uptake of biotin and pantothenate into the brain across the blood-brain barrier. This chain is Sodium-dependent multivitamin transporter (SLC5A6), found in Oryctolagus cuniculus (Rabbit).